The following is a 256-amino-acid chain: MISAQNLVYSLQGRRLTDNVSLTFPGGEIVAILGPNGAGKSTLLRQLTGYLQPDSGECRLFNKPLNEWSITELAKHRAVMRQNSHMAFPFSVQEVIQMGRHPHRTGNQDNETAQIMALCDCQALANRDYRQLSGGEQQRVQLARLLVQLWEPTPSPKWLFLDEPTSALDIHHQQHLFRLLRQLVHERQFNVCCILHDLNLAAHYADRVVLMQKGKVIANGKPQDVLTQQALTMLYGADITVLKDPANHSPLIVLDH.

The ABC transporter domain occupies I2–D238. Residue G34–S41 participates in ATP binding.

It belongs to the ABC transporter superfamily. Heme (hemin) importer (TC 3.A.1.14.5) family. As to quaternary structure, the complex is composed of two ATP-binding proteins (HmuV), two transmembrane proteins (HmuU) and a solute-binding protein (HmuT).

The protein resides in the cell inner membrane. Its function is as follows. Part of the ABC transporter complex HmuTUV involved in hemin import. Responsible for energy coupling to the transport system. This chain is Hemin import ATP-binding protein HmuV, found in Escherichia coli O157:H7.